The primary structure comprises 593 residues: UvrABC system protein C (593 aa).

The 78-residue stretch at 14 to 91 (DKPGCYLMKN…IKEHDPRYNV (78 aa)) folds into the GIY-YIG domain. Residues 196–231 (EEMKQTLTEKMLQAAENMEFERAKEYRDQIKSIEAV) form the UVR domain.

This sequence belongs to the UvrC family. In terms of assembly, interacts with UvrB in an incision complex.

The protein resides in the cytoplasm. Functionally, the UvrABC repair system catalyzes the recognition and processing of DNA lesions. UvrC both incises the 5' and 3' sides of the lesion. The N-terminal half is responsible for the 3' incision and the C-terminal half is responsible for the 5' incision. This Brevibacillus brevis (strain 47 / JCM 6285 / NBRC 100599) protein is UvrABC system protein C.